The chain runs to 423 residues: Glucose-1-phosphate adenylyltransferase (423 aa).

Alpha-D-glucose 1-phosphate-binding positions include Tyr107, Gly172, 187–188 (EK), and Ser205.

The protein belongs to the bacterial/plant glucose-1-phosphate adenylyltransferase family. As to quaternary structure, homotetramer.

The enzyme catalyses alpha-D-glucose 1-phosphate + ATP + H(+) = ADP-alpha-D-glucose + diphosphate. Its pathway is glycan biosynthesis; glycogen biosynthesis. Involved in the biosynthesis of ADP-glucose, a building block required for the elongation reactions to produce glycogen. Catalyzes the reaction between ATP and alpha-D-glucose 1-phosphate (G1P) to produce pyrophosphate and ADP-Glc. The chain is Glucose-1-phosphate adenylyltransferase from Cereibacter sphaeroides (strain ATCC 17025 / ATH 2.4.3) (Rhodobacter sphaeroides).